The sequence spans 333 residues: Holliday junction branch migration complex subunit RuvB (333 aa).

Residues 1–182 are large ATPase domain (RuvB-L); it reads MDERLLSGES…FGVLSRLEYY (182 aa). ATP is bound by residues Leu-21, Arg-22, Gly-63, Lys-66, Thr-67, Thr-68, 129–131, Arg-172, Tyr-182, and Arg-219; that span reads EDF. Thr-67 contacts Mg(2+). The small ATPAse domain (RuvB-S) stretch occupies residues 183-253; sequence TVDQLSAIVE…ITQMALELLQ (71 aa). Residues 256 to 333 form a head domain (RuvB-H) region; sequence KLGLDHIDHK…EHFGMEMPKV (78 aa). DNA-binding residues include Arg-311 and Arg-316.

The protein belongs to the RuvB family. In terms of assembly, homohexamer. Forms an RuvA(8)-RuvB(12)-Holliday junction (HJ) complex. HJ DNA is sandwiched between 2 RuvA tetramers; dsDNA enters through RuvA and exits via RuvB. An RuvB hexamer assembles on each DNA strand where it exits the tetramer. Each RuvB hexamer is contacted by two RuvA subunits (via domain III) on 2 adjacent RuvB subunits; this complex drives branch migration. In the full resolvosome a probable DNA-RuvA(4)-RuvB(12)-RuvC(2) complex forms which resolves the HJ.

The protein resides in the cytoplasm. It carries out the reaction ATP + H2O = ADP + phosphate + H(+). The RuvA-RuvB-RuvC complex processes Holliday junction (HJ) DNA during genetic recombination and DNA repair, while the RuvA-RuvB complex plays an important role in the rescue of blocked DNA replication forks via replication fork reversal (RFR). RuvA specifically binds to HJ cruciform DNA, conferring on it an open structure. The RuvB hexamer acts as an ATP-dependent pump, pulling dsDNA into and through the RuvAB complex. RuvB forms 2 homohexamers on either side of HJ DNA bound by 1 or 2 RuvA tetramers; 4 subunits per hexamer contact DNA at a time. Coordinated motions by a converter formed by DNA-disengaged RuvB subunits stimulates ATP hydrolysis and nucleotide exchange. Immobilization of the converter enables RuvB to convert the ATP-contained energy into a lever motion, pulling 2 nucleotides of DNA out of the RuvA tetramer per ATP hydrolyzed, thus driving DNA branch migration. The RuvB motors rotate together with the DNA substrate, which together with the progressing nucleotide cycle form the mechanistic basis for DNA recombination by continuous HJ branch migration. Branch migration allows RuvC to scan DNA until it finds its consensus sequence, where it cleaves and resolves cruciform DNA. In Bacillus cereus (strain 03BB102), this protein is Holliday junction branch migration complex subunit RuvB.